Reading from the N-terminus, the 313-residue chain is Transaldolase (313 aa).

Lys-125 serves as the catalytic Schiff-base intermediate with substrate.

The protein belongs to the transaldolase family. Type 1 subfamily. As to quaternary structure, homodimer.

The protein resides in the cytoplasm. The catalysed reaction is D-sedoheptulose 7-phosphate + D-glyceraldehyde 3-phosphate = D-erythrose 4-phosphate + beta-D-fructose 6-phosphate. It participates in carbohydrate degradation; pentose phosphate pathway; D-glyceraldehyde 3-phosphate and beta-D-fructose 6-phosphate from D-ribose 5-phosphate and D-xylulose 5-phosphate (non-oxidative stage): step 2/3. Its function is as follows. Transaldolase is important for the balance of metabolites in the pentose-phosphate pathway. The chain is Transaldolase from Pseudomonas syringae pv. syringae (strain B728a).